The primary structure comprises 303 residues: Glycine--tRNA ligase alpha subunit (303 aa).

The protein belongs to the class-II aminoacyl-tRNA synthetase family. Tetramer of two alpha and two beta subunits.

It is found in the cytoplasm. It catalyses the reaction tRNA(Gly) + glycine + ATP = glycyl-tRNA(Gly) + AMP + diphosphate. The polypeptide is Glycine--tRNA ligase alpha subunit (Bordetella pertussis (strain Tohama I / ATCC BAA-589 / NCTC 13251)).